Reading from the N-terminus, the 202-residue chain is NADH-quinone oxidoreductase subunit C (202 aa).

It belongs to the complex I 30 kDa subunit family. As to quaternary structure, NDH-1 is composed of 14 different subunits. Subunits NuoB, C, D, E, F, and G constitute the peripheral sector of the complex.

It localises to the cell inner membrane. The enzyme catalyses a quinone + NADH + 5 H(+)(in) = a quinol + NAD(+) + 4 H(+)(out). Functionally, NDH-1 shuttles electrons from NADH, via FMN and iron-sulfur (Fe-S) centers, to quinones in the respiratory chain. The immediate electron acceptor for the enzyme in this species is believed to be ubiquinone. Couples the redox reaction to proton translocation (for every two electrons transferred, four hydrogen ions are translocated across the cytoplasmic membrane), and thus conserves the redox energy in a proton gradient. The protein is NADH-quinone oxidoreductase subunit C of Bartonella quintana (strain Toulouse) (Rochalimaea quintana).